We begin with the raw amino-acid sequence, 374 residues long: Methylthioribose-1-phosphate isomerase (374 aa).

An N-acetylserine modification is found at Ser-2. Asp-253 (proton donor) is an active-site residue.

It belongs to the eIF-2B alpha/beta/delta subunits family. MtnA subfamily.

Its subcellular location is the cytoplasm. The protein resides in the nucleus. The catalysed reaction is 5-(methylsulfanyl)-alpha-D-ribose 1-phosphate = 5-(methylsulfanyl)-D-ribulose 1-phosphate. Its pathway is amino-acid biosynthesis; L-methionine biosynthesis via salvage pathway; L-methionine from S-methyl-5-thio-alpha-D-ribose 1-phosphate: step 1/6. In terms of biological role, catalyzes the interconversion of methylthioribose-1-phosphate (MTR-1-P) into methylthioribulose-1-phosphate (MTRu-1-P). The chain is Methylthioribose-1-phosphate isomerase from Arabidopsis thaliana (Mouse-ear cress).